The following is a 421-amino-acid chain: Imidazolonepropionase (421 aa).

Fe(3+) is bound by residues histidine 81 and histidine 83. Zn(2+) contacts are provided by histidine 81 and histidine 83. Arginine 90, tyrosine 153, and histidine 186 together coordinate 4-imidazolone-5-propanoate. N-formimidoyl-L-glutamate is bound at residue tyrosine 153. Residue histidine 251 coordinates Fe(3+). Residue histidine 251 coordinates Zn(2+). Glutamate 254 lines the 4-imidazolone-5-propanoate pocket. Aspartate 326 provides a ligand contact to Fe(3+). Position 326 (aspartate 326) interacts with Zn(2+). The N-formimidoyl-L-glutamate site is built by asparagine 328 and glycine 330. Serine 331 contributes to the 4-imidazolone-5-propanoate binding site.

It belongs to the metallo-dependent hydrolases superfamily. HutI family. It depends on Zn(2+) as a cofactor. Fe(3+) serves as cofactor.

The protein localises to the cytoplasm. It carries out the reaction 4-imidazolone-5-propanoate + H2O = N-formimidoyl-L-glutamate. It participates in amino-acid degradation; L-histidine degradation into L-glutamate; N-formimidoyl-L-glutamate from L-histidine: step 3/3. Its function is as follows. Catalyzes the hydrolytic cleavage of the carbon-nitrogen bond in imidazolone-5-propanoate to yield N-formimidoyl-L-glutamate. It is the third step in the universal histidine degradation pathway. The polypeptide is Imidazolonepropionase (Streptococcus sanguinis (strain SK36)).